The chain runs to 746 residues: GTPase-activating protein GYP7 (746 aa).

Ser265 and Ser339 each carry phosphoserine. Residues 385 to 633 (LENDSLRGKV…HIWENFWTFY (249 aa)) form the Rab-GAP TBC domain. Residues 470–505 (TIDGLPPPPQQLPANENNSTSPESANDESDDADDGV) are disordered. The segment covering 481-491 (LPANENNSTSP) has biased composition (polar residues).

Its subcellular location is the cytoplasm. Functionally, GTPase-activating protein (GAP) that most effectively accelerates the intrinsic GTPase activity of Ypt/Rab-type GTPase YPT7 involved in vacuole docking and fusion. It is also active, but to a lesser extent, on YPT31, YPT32, YPT1, YPT6 and SEC4. Provides a catalytic arginine (arginine finger) in trans to accelerate the GTP hydrolysis rate of the substrate GTPase. The protein is GTPase-activating protein GYP7 (GYP7) of Saccharomyces cerevisiae (strain ATCC 204508 / S288c) (Baker's yeast).